Consider the following 455-residue polypeptide: Transcriptional regulatory protein FlbD (455 aa).

One can recognise a Response regulatory domain in the interval 2–114 (RLLVVGKLNG…LIAAVLAAVT (113 aa)). Residues 120 to 349 (MVVRDPAMEQ…LENAMHRAVL (230 aa)) form the Sigma-54 factor interaction domain. ATP-binding positions include 148–155 (GESGSGKE) and 211–220 (ADGGTLLLDE). The H-T-H motif DNA-binding region spans 416–435 (RTHAANILGISIRTLRNKLK).

The protein resides in the cytoplasm. Functionally, activation of sigma-54-dependent flagellar gene promoters and strong negative autoregulatory effects on its own promoter. The synthesis and function of FlbD in C.crescentus is controlled by an internal cell-cycle clock. The sequence is that of Transcriptional regulatory protein FlbD (flbD) from Caulobacter vibrioides (strain ATCC 19089 / CIP 103742 / CB 15) (Caulobacter crescentus).